The following is a 314-amino-acid chain: Aspartate carbamoyltransferase catalytic subunit (314 aa).

Carbamoyl phosphate is bound by residues Arg-63 and Thr-64. Residue Lys-91 participates in L-aspartate binding. Positions 113, 143, and 146 each coordinate carbamoyl phosphate. L-aspartate-binding residues include Arg-176 and Arg-228. Carbamoyl phosphate is bound by residues Ala-269 and Pro-270.

It belongs to the aspartate/ornithine carbamoyltransferase superfamily. ATCase family. Heterododecamer (2C3:3R2) of six catalytic PyrB chains organized as two trimers (C3), and six regulatory PyrI chains organized as three dimers (R2).

The enzyme catalyses carbamoyl phosphate + L-aspartate = N-carbamoyl-L-aspartate + phosphate + H(+). Its pathway is pyrimidine metabolism; UMP biosynthesis via de novo pathway; (S)-dihydroorotate from bicarbonate: step 2/3. In terms of biological role, catalyzes the condensation of carbamoyl phosphate and aspartate to form carbamoyl aspartate and inorganic phosphate, the committed step in the de novo pyrimidine nucleotide biosynthesis pathway. This is Aspartate carbamoyltransferase catalytic subunit from Cutibacterium acnes (strain DSM 16379 / KPA171202) (Propionibacterium acnes).